Consider the following 142-residue polypeptide: Large ribosomal subunit protein uL11 (142 aa).

This sequence belongs to the universal ribosomal protein uL11 family. As to quaternary structure, part of the ribosomal stalk of the 50S ribosomal subunit. Interacts with L10 and the large rRNA to form the base of the stalk. L10 forms an elongated spine to which L12 dimers bind in a sequential fashion forming a multimeric L10(L12)X complex. Post-translationally, one or more lysine residues are methylated.

Forms part of the ribosomal stalk which helps the ribosome interact with GTP-bound translation factors. This is Large ribosomal subunit protein uL11 from Pseudoalteromonas translucida (strain TAC 125).